We begin with the raw amino-acid sequence, 353 residues long: Mitochondrial glutathione transporter SLC25A40 (353 aa).

3 Solcar repeats span residues 14–132 (ITPF…LFAL), 140–224 (RSDL…GKWW), and 234–328 (PTVA…GKAF). Helical transmembrane passes span 20-40 (MMAS…LDVV), 104-124 (LWSG…IYFT), 143-163 (LAPL…ISPL), 200-221 (WGPT…YEKG), 237-257 (AITF…TLPF), and 299-319 (GLFA…AIMI).

The protein belongs to the mitochondrial carrier (TC 2.A.29) family.

It is found in the mitochondrion inner membrane. It carries out the reaction glutathione(in) = glutathione(out). In terms of biological role, probable mitochondrial transporter required for glutathione import into mitochondria. Glutathione, which plays key roles in oxidative metabolism, is produced exclusively in the cytosol and is imported in many organelles. Mitochondrial glutathione is required for the activity and stability of proteins containing iron-sulfur clusters. The polypeptide is Mitochondrial glutathione transporter SLC25A40 (Danio rerio (Zebrafish)).